We begin with the raw amino-acid sequence, 677 residues long: Envelope glycoprotein (677 aa).

The N-terminal stretch at 1 to 33 (MGSGYQLLQLPRERFRKTSFLVWVIILFQRAIS) is a signal peptide. Residues 34 to 651 (MPLGIVTNST…DLNLWTGWRQ (618 aa)) lie on the Extracellular side of the membrane. An N-linked (GlcNAc...) asparagine; by host glycan is attached at N41. 5 cysteine pairs are disulfide-bonded: C54–C610, C109–C136, C122–C148, C512–C557, and C602–C609. The interval 55-202 (RDKLSSTSQL…HFWKATPAHE (148 aa)) is receptor-binding. Residues N205, N239, N258, N269, N297, N317, N318, N339, N406, N420, N435, and N463 are each glycosylated (N-linked (GlcNAc...) asparagine; by host). The interval 306-486 (NLHFQILSTH…PSQPGLTINT (181 aa)) is mucin-like region. Residues 315-326 (HTNNSSDQSPAG) are compositionally biased toward polar residues. Disordered regions lie at residues 315 to 349 (HTNN…TDSP), 370 to 483 (NGET…PGLT), and 489 to 508 (KVAD…RQNT). 3 stretches are compositionally biased toward polar residues: residues 370–421 (NGET…ASNE), 428–445 (MNSI…QTKA), and 458–472 (PQET…TSPG). Residues 525–540 (GAAAGLAWIPYFGPAA) are fusion peptide. Residues 555–596 (LICGLRQLANETTQALQLFLRATTELRTYSLLNRKAIDFLLQ) adopt a coiled-coil conformation. An N-linked (GlcNAc...) asparagine; by host glycan is attached at N564. Residues 616 to 635 (WTKNITDEINQIKHDFIDNP) adopt a coiled-coil conformation. N619 carries an N-linked (GlcNAc...) asparagine; by host glycan. The chain crosses the membrane as a helical span at residues 652 to 672 (WIPAGIGIIGVIIAIIALLCI). 2 S-palmitoyl cysteine; by host lipidation sites follow: C671 and C673. Topologically, residues 673 to 677 (CKILC) are cytoplasmic.

The protein belongs to the filoviruses glycoprotein family. Homotrimer; each monomer consists of a GP1 and a GP2 subunit linked by disulfide bonds. The resulting peplomers (GP1,2) protrude from the virus surface as spikes. Interacts with host integrin alpha-V/ITGAV. Interacts with host CLEC10A. Binds also to host CD209 and CLEC4M/DC-SIGN(R). Interacts with host FOLR1. Interacts with BST2; this interaction inhibits the antiviral effect of BST2 and this allows viral release from infected cells. Interacts with host FCN1; this interaction enhances viral entry. Interacts with host TLR4; this interaction induces cell death in T-lymphocytes or proinflammatory cytokines and SOCS1 production in monocytes. As to quaternary structure, interacts with host entry receptor NPC1. In terms of assembly, GP1 and GP2delta are part of GP1,2delta soluble complexes released by ectodomain shedding. Post-translationally, the signal peptide region modulates GP's high mannose glycosylation, thereby determining the efficiency of the interactions with DC-SIGN(R). N-glycosylated. In terms of processing, O-glycosylated in the mucin-like region. Post-translationally, palmitoylation of GP2 is not required for its function. Specific enzymatic cleavages in vivo yield mature proteins. The precursor is processed into GP1 and GP2 by host cell furin in the trans Golgi, and maybe by other host proteases, to yield the mature GP1 and GP2 proteins. The cleavage site corresponds to the furin optimal cleavage sequence [KR]-X-[KR]-R. This cleavage does not seem to be required for function. After the internalization of the virus into cell endosomes, GP1 C-terminus is removed by the endosomal proteases cathepsin B, cathepsin L, or both, leaving a 19-kDa N-terminal fragment which is further digested by cathepsin B. Proteolytic processing of GP1,2 by host ADAM17 can remove the transmembrane anchor of GP2 and leads to shedding of complexes consisting in GP1 and truncated GP2 (GP1,2delta).

Its subcellular location is the virion membrane. The protein localises to the host cell membrane. The protein resides in the secreted. Trimeric GP1,2 complexes form the virion surface spikes and mediate the viral entry processes, with GP1 acting as the receptor-binding subunit and GP2 as the membrane fusion subunit. At later times of infection, down-regulates the expression of various host cell surface molecules that are essential for immune surveillance and cell adhesion. Down-modulates several integrins including ITGA1, ITGA2, ITGA3, ITGA4, ITGA5, ITGA6, ITGAV and ITGB1. This decrease in cell adhesion molecules may lead to cell detachment, contributing to the disruption of blood vessel integrity and hemorrhages developed during infection (cytotoxicity). Interacts with host TLR4 and thereby stimulates the differentiation and activation of monocytes leading to bystander death of T-lymphocytes. Down-regulates as well the function of host natural killer cells. Counteracts the antiviral effect of host BST2/tetherin that restricts release of progeny virions from infected cells. However, cooperates with VP40 and host BST2 to activate canonical NF-kappa-B pathway in a manner dependent on neddylation. Its function is as follows. Functions as a decoy for anti-GP1,2 antibodies thereby contributing to viral immune evasion. Interacts and activates host macrophages and dendritic cells inducing up-regulation of cytokine transcription. This effect is mediated throught activation of host TLR4. In terms of biological role, responsible for binding to the receptor(s) on target cells. Interacts with CD209/DC-SIGN and CLEC4M/DC-SIGNR which act as cofactors for virus entry into dendritic cells (DCs) and endothelial cells. Binding to the macrophage specific lectin CLEC10A also seems to enhance virus infectivity. Interaction with FOLR1/folate receptor alpha may be a cofactor for virus entry in some cell types, although results are contradictory. Members of the Tyro3 receptor tyrosine kinase family also seem to be cell entry factors in filovirus infection. Once attached, the virions are internalized through clathrin-dependent endocytosis and/or macropinocytosis. After internalization of the virus into the endosomes of the host cell, proteolysis of GP1 by two cysteine proteases, CTSB/cathepsin B and CTSL/cathepsin L removes the glycan cap and allows GP1 binding to the host entry receptor NPC1. NPC1-binding, Ca(2+) and acidic pH induce a conformational change of GP2, which unmasks its fusion peptide and permit membranes fusion. Functionally, acts as a class I viral fusion protein. Under the current model, the protein has at least 3 conformational states: pre-fusion native state, pre-hairpin intermediate state, and post-fusion hairpin state. During viral and target cell membrane fusion, the coiled coil regions (heptad repeats) assume a trimer-of-hairpins structure, positioning the fusion peptide in close proximity to the C-terminal region of the ectodomain. The formation of this structure appears to drive apposition and subsequent fusion of viral and target cell membranes. Responsible for penetration of the virus into the cell cytoplasm by mediating the fusion of the membrane of the endocytosed virus particle with the endosomal membrane. Low pH in endosomes induces an irreversible conformational change in GP2, releasing the fusion hydrophobic peptide. This chain is Envelope glycoprotein (GP), found in Reston ebolavirus (strain Philippines-96) (REBOV).